Consider the following 32-residue polypeptide: MASEIFGTAAIFWVLIPIGLVGGALLLKLEGD.

Residues 5-25 (IFGTAAIFWVLIPIGLVGGAL) traverse the membrane as a helical segment.

Belongs to the PetM family. In terms of assembly, the 4 large subunits of the cytochrome b6-f complex are cytochrome b6, subunit IV (17 kDa polypeptide, PetD), cytochrome f and the Rieske protein, while the 4 small subunits are PetG, PetL, PetM and PetN. The complex functions as a dimer.

The protein localises to the cellular thylakoid membrane. Its function is as follows. Component of the cytochrome b6-f complex, which mediates electron transfer between photosystem II (PSII) and photosystem I (PSI), cyclic electron flow around PSI, and state transitions. The protein is Cytochrome b6-f complex subunit 7 of Synechococcus sp. (strain CC9902).